Reading from the N-terminus, the 152-residue chain is Ribosomal RNA large subunit methyltransferase H (152 aa).

Residues Leu70, Gly102, and 120 to 125 (LSPMTF) contribute to the S-adenosyl-L-methionine site.

The protein belongs to the RNA methyltransferase RlmH family. As to quaternary structure, homodimer.

It localises to the cytoplasm. The enzyme catalyses pseudouridine(1915) in 23S rRNA + S-adenosyl-L-methionine = N(3)-methylpseudouridine(1915) in 23S rRNA + S-adenosyl-L-homocysteine + H(+). Specifically methylates the pseudouridine at position 1915 (m3Psi1915) in 23S rRNA. This chain is Ribosomal RNA large subunit methyltransferase H, found in Pelobacter propionicus (strain DSM 2379 / NBRC 103807 / OttBd1).